A 352-amino-acid chain; its full sequence is MRVAVDVMGGDNAPHVEVEGAVAAAREFGVPVTLVGDVEKVRAELARHDCKGLDIEVWHASEVVGMHDSASDAVRKKKDSSIRVAFELVKGGEAVAVVSAGNSGATMAAGMFVLKRMKGIDRAAIAQLFPTVSGKTLVLDVGGNVDCKPIHLVQFAVMGEVYARFVMGVDNPKVGLLSNGEEASKGNELTRETSALLREKPINYIGYVEGRDIFNGSVDVVVCDGFVGNVALKLSEGLAEAVGKMLKAEIKSSFLSQIGYLLSRKAFNNFKKTVDYAEYGGAPLLGINGVGMICHGGSNPKAIKNAIRFAHEYALKGVNGRMAEKLNESFPGDAREREGAQAPDAGTERVAS.

Basic and acidic residues predominate over residues Glu328–Gly339. The interval Glu328 to Ser352 is disordered.

It belongs to the PlsX family. In terms of assembly, homodimer. Probably interacts with PlsY.

The protein resides in the cytoplasm. It carries out the reaction a fatty acyl-[ACP] + phosphate = an acyl phosphate + holo-[ACP]. It functions in the pathway lipid metabolism; phospholipid metabolism. Its function is as follows. Catalyzes the reversible formation of acyl-phosphate (acyl-PO(4)) from acyl-[acyl-carrier-protein] (acyl-ACP). This enzyme utilizes acyl-ACP as fatty acyl donor, but not acyl-CoA. The chain is Phosphate acyltransferase from Geobacter sp. (strain M21).